The sequence spans 262 residues: 7alpha-hydroxysteroid dehydrogenase (262 aa).

NADP(+) contacts are provided by residues 13-18 (SSTRGI), Arg-38, 63-64 (NA), and Asn-90. Taurochenodeoxycholate-binding residues include Thr-145 and Tyr-158. NADP(+) is bound by residues Tyr-158, Lys-162, and 191 to 195 (IGTRA). The Proton acceptor role is filled by Tyr-158.

Belongs to the short-chain dehydrogenases/reductases (SDR) family. Homotetramer. A dynamic equilibrium between dimers and tetramers seems to exist.

It catalyses the reaction cholate + NADP(+) = 3alpha,12alpha-dihydroxy-7-oxo-5beta-cholanate + NADPH + H(+). The enzyme catalyses chenodeoxycholate + NADP(+) = 7-oxolithocholate + NADPH + H(+). The catalysed reaction is 3alpha,7alpha-dihydroxy-12-oxo-5beta-cholanate + NADP(+) = 7,12-dioxo-lithocholate + NADPH + H(+). It carries out the reaction 7alpha-hydroxy-3,12-dioxo-5beta-cholanate + NADP(+) = dehydrocholate + NADPH + H(+). It catalyses the reaction glycochenodeoxycholate + NADP(+) = 7-oxoglycolithocholate + NADPH + H(+). The enzyme catalyses taurochenodeoxycholate + NADP(+) = 7-oxotaurolithocholate + NADPH + H(+). Its activity is regulated as follows. Activated by metal ions such as Mg(2+), Na(+) and K(+). Functionally, 7alpha-hydroxysteroid dehydrogenase that catalyzes the NADP(+)-dependent oxidation of the 7alpha-hydroxy group of 7alpha-hydroxysteroids, such as cholate, chenodeoxycholate, glycochenodeoxycholate and taurochenodeoxycholate, to the corresponding 7-oxosteroids. Is also able to catalyze the reverse reduction reactions. Together with 7beta-HSDH encoded in the adjacent gene, is likely involved in the epimerization of the hydroxy group at C-7 of primary bile acids through 7-keto bile acid intermediates. The polypeptide is 7alpha-hydroxysteroid dehydrogenase (Clostridium sardiniense (Clostridium absonum)).